Reading from the N-terminus, the 616-residue chain is Dihydroxy-acid dehydratase (616 aa).

Aspartate 81 is a Mg(2+) binding site. Position 122 (cysteine 122) interacts with [2Fe-2S] cluster. The Mg(2+) site is built by aspartate 123 and lysine 124. N6-carboxylysine is present on lysine 124. Cysteine 195 lines the [2Fe-2S] cluster pocket. Glutamate 491 is a binding site for Mg(2+). Serine 517 (proton acceptor) is an active-site residue.

It belongs to the IlvD/Edd family. As to quaternary structure, homodimer. The cofactor is [2Fe-2S] cluster. Requires Mg(2+) as cofactor.

The enzyme catalyses (2R)-2,3-dihydroxy-3-methylbutanoate = 3-methyl-2-oxobutanoate + H2O. The catalysed reaction is (2R,3R)-2,3-dihydroxy-3-methylpentanoate = (S)-3-methyl-2-oxopentanoate + H2O. Its pathway is amino-acid biosynthesis; L-isoleucine biosynthesis; L-isoleucine from 2-oxobutanoate: step 3/4. The protein operates within amino-acid biosynthesis; L-valine biosynthesis; L-valine from pyruvate: step 3/4. In terms of biological role, functions in the biosynthesis of branched-chain amino acids. Catalyzes the dehydration of (2R,3R)-2,3-dihydroxy-3-methylpentanoate (2,3-dihydroxy-3-methylvalerate) into 2-oxo-3-methylpentanoate (2-oxo-3-methylvalerate) and of (2R)-2,3-dihydroxy-3-methylbutanoate (2,3-dihydroxyisovalerate) into 2-oxo-3-methylbutanoate (2-oxoisovalerate), the penultimate precursor to L-isoleucine and L-valine, respectively. The sequence is that of Dihydroxy-acid dehydratase from Edwardsiella ictaluri (strain 93-146).